Here is an 846-residue protein sequence, read N- to C-terminus: Protein kintoun (846 aa).

Disordered stretches follow at residues Thr216–Glu240, Leu372–Ala405, Gln574–Cys631, and Lys762–Asp846. The segment covering Leu372 to Val382 has biased composition (basic and acidic residues). Position 380 is a phosphoserine (Ser380). Acidic residues predominate over residues Pro391–Leu400. Residues Gly583–His603 show a composition bias toward basic and acidic residues. Composition is skewed to basic residues over residues Lys611 to Lys622 and Lys762 to Gln776. Ser780 is modified (phosphoserine). The segment covering Leu795–Asn809 has biased composition (polar residues).

It belongs to the PIH1 family. Kintoun subfamily. In terms of assembly, interacts with Pp1alpha-96A, Pp1-87B, Pp1-13C and flw.

The protein resides in the cytoplasm. Required for cytoplasmic pre-assembly of axonemal dyneins, thereby playing a central role in motility in cilia and flagella. Involved in pre-assembly of dynein arm complexes in the cytoplasm before intraflagellar transport loads them for the ciliary compartment. The protein is Protein kintoun of Drosophila yakuba (Fruit fly).